The chain runs to 520 residues: Cytochrome P450 6d3 (520 aa).

Cys461 contacts heme.

This sequence belongs to the cytochrome P450 family. The cofactor is heme.

It is found in the endoplasmic reticulum membrane. It localises to the microsome membrane. Metabolizes pyrethroid insecticides and other xenobiotics. This chain is Cytochrome P450 6d3 (CYP6D3), found in Musca domestica (House fly).